The sequence spans 201 residues: UPF0301 protein CE2927 (201 aa).

Belongs to the UPF0301 (AlgH) family.

The chain is UPF0301 protein CE2927 from Corynebacterium efficiens (strain DSM 44549 / YS-314 / AJ 12310 / JCM 11189 / NBRC 100395).